Consider the following 239-residue polypeptide: Ribose-5-phosphate isomerase A (239 aa).

Substrate-binding positions include 40-43 (SGST), 96-99 (DGAD), and 110-113 (KGGG). E119 serves as the catalytic Proton acceptor. K137 lines the substrate pocket.

This sequence belongs to the ribose 5-phosphate isomerase family. In terms of assembly, homodimer.

It carries out the reaction aldehydo-D-ribose 5-phosphate = D-ribulose 5-phosphate. It participates in carbohydrate degradation; pentose phosphate pathway; D-ribose 5-phosphate from D-ribulose 5-phosphate (non-oxidative stage): step 1/1. Catalyzes the reversible conversion of ribose-5-phosphate to ribulose 5-phosphate. The polypeptide is Ribose-5-phosphate isomerase A (Methanococcus vannielii (strain ATCC 35089 / DSM 1224 / JCM 13029 / OCM 148 / SB)).